We begin with the raw amino-acid sequence, 111 residues long: Large ribosomal subunit protein P1 (111 aa).

Positions 84-111 (PAEAAAAEEKKEEEKEESDEDMGFGLFD) are disordered.

The protein belongs to the eukaryotic ribosomal protein P1/P2 family. P1 and P2 exist as dimers at the large ribosomal subunit. Post-translationally, phosphorylated.

In terms of biological role, plays an important role in the elongation step of protein synthesis. The chain is Large ribosomal subunit protein P1 from Aspergillus fumigatus (strain ATCC MYA-4609 / CBS 101355 / FGSC A1100 / Af293) (Neosartorya fumigata).